We begin with the raw amino-acid sequence, 163 residues long: NAD(P)H-quinone oxidoreductase subunit I, chloroplastic (163 aa).

2 4Fe-4S ferredoxin-type domains span residues 55 to 84 (GRIHFEFDKCIACEVCVRVCPIDLPVVDWK) and 95 to 124 (LNYSIDFGICIFCGNCIEYCPTNCLSMTEE). [4Fe-4S] cluster is bound by residues C64, C67, C70, C74, C104, C107, C110, and C114.

This sequence belongs to the complex I 23 kDa subunit family. In terms of assembly, NDH is composed of at least 16 different subunits, 5 of which are encoded in the nucleus. [4Fe-4S] cluster serves as cofactor.

The protein resides in the plastid. The protein localises to the chloroplast thylakoid membrane. It catalyses the reaction a plastoquinone + NADH + (n+1) H(+)(in) = a plastoquinol + NAD(+) + n H(+)(out). The enzyme catalyses a plastoquinone + NADPH + (n+1) H(+)(in) = a plastoquinol + NADP(+) + n H(+)(out). Functionally, NDH shuttles electrons from NAD(P)H:plastoquinone, via FMN and iron-sulfur (Fe-S) centers, to quinones in the photosynthetic chain and possibly in a chloroplast respiratory chain. The immediate electron acceptor for the enzyme in this species is believed to be plastoquinone. Couples the redox reaction to proton translocation, and thus conserves the redox energy in a proton gradient. The sequence is that of NAD(P)H-quinone oxidoreductase subunit I, chloroplastic from Glycine max (Soybean).